A 364-amino-acid chain; its full sequence is PDZ and LIM domain protein 3 (364 aa).

Residues 1–84 (MPQTVILPGP…QLCLKIDRGE (84 aa)) form the PDZ domain. Ser-18, Ser-93, and Ser-264 each carry phosphoserine. The region spanning 292–351 (PLCDKCGSGIVGAVVKARDKYRHPECFVCADCNLNLKQKGYFFIEGELYCETHARARTKP) is the LIM zinc-binding domain.

As to quaternary structure, interacts with ACTN2. Forms a heterodimer with PDLIM4 (via LIM domain). As to expression, isoform 1 is highly expressed in differentiated skeletal muscle. Isoform 2 is heart-specific.

The protein resides in the cytoplasm. It localises to the myofibril. Its subcellular location is the sarcomere. It is found in the z line. May play a role in the organization of actin filament arrays within muscle cells. In Homo sapiens (Human), this protein is PDZ and LIM domain protein 3 (PDLIM3).